The sequence spans 533 residues: Pre-mRNA-splicing factor cwf24 (533 aa).

Over residues 1-17 (MEQKNLNINQASGSKIN) the composition is skewed to polar residues. The tract at residues 1-69 (MEQKNLNINQ…MRDNIPIVSG (69 aa)) is disordered. Basic residues predominate over residues 27-43 (SRRRHRPRQGLKRKKGF). The C3H1-type zinc finger occupies 184–212 (DYQPDVCKDYKLTGYCGYGDTCKFLHMRE). Residues 254–292 (CLICKKDYRSPIATTCGHHFCEQCAITRYRKTPTCIQCG) form an RING-type zinc finger. An N-acetyltransferase domain is found at 379–524 (YFIREITESN…SAFYMVCPLS (146 aa)).

This sequence belongs to the CWC24 family. As to quaternary structure, belongs to the 40S cdc5-associated complex (or cwf complex), a spliceosome sub-complex reminiscent of a late-stage spliceosome composed of the U2, U5 and U6 snRNAs and at least brr2, cdc5, cwf2/prp3, cwf3/syf1, cwf4/syf3, cwf5/ecm2, spp42/cwf6, cwf7/spf27, cwf8, cwf9, cwf10, cwf11, cwf12, prp45/cwf13, cwf14, cwf15, cwf16, cwf17, cwf18, cwf19, cwf20, cwf21, cwf22, cwf23, cwf24, cwf25, cwf26, cyp7/cwf27, cwf28, cwf29/ist3, lea1, msl1, prp5/cwf1, prp10, prp12/sap130, prp17, prp22, sap61, sap62, sap114, sap145, slu7, smb1, smd1, smd3, smf1, smg1 and syf2.

It localises to the nucleus. In terms of biological role, involved in mRNA splicing. This is Pre-mRNA-splicing factor cwf24 (cwf24) from Schizosaccharomyces pombe (strain 972 / ATCC 24843) (Fission yeast).